A 368-amino-acid polypeptide reads, in one-letter code: Quinolinate synthase (368 aa).

Iminosuccinate-binding residues include His-46 and Ser-63. A [4Fe-4S] cluster-binding site is contributed by Cys-110. Iminosuccinate contacts are provided by residues 141–143 and Ser-162; that span reads YVN. Cys-230 contributes to the [4Fe-4S] cluster binding site. Iminosuccinate contacts are provided by residues 256-258 and Thr-273; that span reads HPE. Cys-320 contacts [4Fe-4S] cluster.

Belongs to the quinolinate synthase family. Type 3 subfamily. It depends on [4Fe-4S] cluster as a cofactor.

The protein localises to the cytoplasm. It carries out the reaction iminosuccinate + dihydroxyacetone phosphate = quinolinate + phosphate + 2 H2O + H(+). The protein operates within cofactor biosynthesis; NAD(+) biosynthesis; quinolinate from iminoaspartate: step 1/1. Catalyzes the condensation of iminoaspartate with dihydroxyacetone phosphate to form quinolinate. This Bacillus cereus (strain ZK / E33L) protein is Quinolinate synthase.